Consider the following 398-residue polypeptide: Cytochrome b (398 aa).

The helical transmembrane segment at 45-65 threads the bilayer; that stretch reads LGSIAGIALVIQIITGVILAM. Heme b is bound by residues His95 and His109. The next 8 membrane-spanning stretches (helical) occupy residues 97–117, 129–149, 164–184, 192–212, 245–265, 304–324, 335–355, and 364–384; these read VGASMFFATIYLHIARGLYYG, IGIIIFLIMMATAFMGYVLPW, FSAIPLIGEPIVIWLCGGFSV, FFSLHYLFPFIIVALVILHLL, FVGFGVYFIIFAYFIFYEPNY, LAGVFLMFGSIFVLFLLPWLD, PIYRIAFWIFMADCLFLGYLG, and IIISRFSACYYFCHFLVVLPL. 2 residues coordinate heme b: His196 and His210.

Belongs to the cytochrome b family. The main subunits of complex b-c1 are: cytochrome b, cytochrome c1 and the Rieske protein. The cofactor is heme b.

It localises to the cell membrane. Its function is as follows. Component of the ubiquinol-cytochrome c reductase complex (complex III or cytochrome b-c1 complex), which is a respiratory chain that generates an electrochemical potential coupled to ATP synthesis. The chain is Cytochrome b (petB) from Rickettsia typhi (strain ATCC VR-144 / Wilmington).